Reading from the N-terminus, the 203-residue chain is Large ribosomal subunit protein bL25 (203 aa).

The protein belongs to the bacterial ribosomal protein bL25 family. CTC subfamily. Part of the 50S ribosomal subunit; part of the 5S rRNA/L5/L18/L25 subcomplex. Contacts the 5S rRNA. Binds to the 5S rRNA independently of L5 and L18.

Functionally, this is one of the proteins that binds to the 5S RNA in the ribosome where it forms part of the central protuberance. In Pseudomonas savastanoi pv. phaseolicola (strain 1448A / Race 6) (Pseudomonas syringae pv. phaseolicola (strain 1448A / Race 6)), this protein is Large ribosomal subunit protein bL25.